The chain runs to 920 residues: Glutamate receptor 2.2 (920 aa).

The signal sequence occupies residues Met1–Gly24. At Gln25 to Ser580 the chain is on the extracellular side. 7 N-linked (GlcNAc...) asparagine glycosylation sites follow: Asn53, Asn204, Asn267, Asn331, Asn342, Asn477, and Asn542. A helical transmembrane segment spans residues Ile581 to Leu601. Over Glu602–Arg610 the chain is Cytoplasmic. The helical transmembrane segment at Gly611–Ala631 threads the bilayer. The Cytoplasmic segment spans residues Pro632–Arg635. The chain crosses the membrane as a helical span at residues Val636–Thr656. At Gln657–Ser830 the chain is on the extracellular side. N-linked (GlcNAc...) asparagine glycosylation occurs at Asn702. A helical membrane pass occupies residues Phe831–Phe851. Topologically, residues Cys852–Leu920 are cytoplasmic.

This sequence belongs to the glutamate-gated ion channel (TC 1.A.10.1) family. As to quaternary structure, may form heteromers. Expressed predominantly in roots.

It localises to the membrane. In terms of biological role, glutamate-gated receptor that probably acts as a non-selective cation channel. May be involved in light-signal transduction and calcium homeostasis via the regulation of calcium influx into cells. This is Glutamate receptor 2.2 (GLR2.2) from Arabidopsis thaliana (Mouse-ear cress).